A 387-amino-acid polypeptide reads, in one-letter code: Leucine aminopeptidase 1 (387 aa).

Positions 1 to 18 (MKIRAALALSATASGVLA) are cleaved as a signal peptide. Positions 19–87 (AVVPQQALLN…YPTLHQASNV (69 aa)) are excised as a propeptide. N-linked (GlcNAc...) asparagine glycosylation occurs at N179. Residues H187, D206, E245, and D272 each coordinate Zn(2+). C321 and C325 are joined by a disulfide. H354 is a binding site for Zn(2+).

This sequence belongs to the peptidase M28 family. M28E subfamily. In terms of assembly, monomer. The cofactor is Zn(2+).

The protein localises to the secreted. In terms of biological role, extracellular aminopeptidase that allows assimilation of proteinaceous substrates. This Aspergillus oryzae (strain ATCC 42149 / RIB 40) (Yellow koji mold) protein is Leucine aminopeptidase 1 (lap1).